Here is a 380-residue protein sequence, read N- to C-terminus: Beta-1,3-N-acetylglucosaminyltransferase lunatic fringe (380 aa).

Residues 1 to 8 (MLKRCGRR) are Cytoplasmic-facing. A helical; Signal-anchor for type II membrane protein membrane pass occupies residues 9–29 (LLLALAGALLACLLVLTADPP). At 30–380 (PPPVPAERGR…TSWCPRSAIF (351 aa)) the chain is on the lumenal side. The interval 85-110 (SRRDVGPPPGGAPRPADGPPRPLAEP) is disordered. A compositionally biased stretch (pro residues) spans 90 to 107 (GPPPGGAPRPADGPPRPL). R130 serves as a coordination point for substrate. Residue N168 is glycosylated (N-linked (GlcNAc...) asparagine). Cystine bridges form between C169–C180 and C198–C261. D202 serves as a coordination point for substrate. D203 contacts Mn(2+). D291 is an active-site residue. H315 contacts Mn(2+). The cysteines at positions 365 and 374 are disulfide-linked.

This sequence belongs to the glycosyltransferase 31 family. Mn(2+) is required as a cofactor. Requires Co(2+) as cofactor. In terms of processing, a soluble form may be derived from the membrane form by proteolytic processing.

The protein localises to the golgi apparatus. It is found in the golgi apparatus membrane. It catalyses the reaction 3-O-(alpha-L-fucosyl)-L-threonyl-[EGF-like domain protein] + UDP-N-acetyl-alpha-D-glucosamine = 3-O-(N-acetyl-beta-D-glucosaminyl-(1-&gt;3)-alpha-L-fucosyl)-L-threonyl-[EGF-like domain protein] + UDP + H(+). The enzyme catalyses 3-O-(alpha-L-fucosyl)-L-seryl-[EGF-like domain protein] + UDP-N-acetyl-alpha-D-glucosamine = 3-O-(N-acetyl-beta-D-glucosaminyl-(1-&gt;3)-alpha-L-fucosyl)-L-seryl-[EGF-like domain protein] + UDP + H(+). Its function is as follows. Glycosyltransferase that initiates the elongation of O-linked fucose residues attached to EGF-like repeats in the extracellular domain of Notch molecules. Modulates NOTCH1 activity by modifying O-fucose residues at specific EGF-like domains resulting in inhibition of NOTCH1 activation by JAG1 and enhancement of NOTCH1 activation by DLL1 via an increase in its binding to DLL1. Decreases the binding of JAG1 to NOTCH2 but not that of DLL1. Essential mediator of somite segmentation and patterning. The chain is Beta-1,3-N-acetylglucosaminyltransferase lunatic fringe (LFNG) from Bos taurus (Bovine).